The primary structure comprises 201 residues: Holliday junction resolvase RecU (201 aa).

Residues T87, D89, E102, and Q121 each coordinate Mg(2+).

This sequence belongs to the RecU family. Requires Mg(2+) as cofactor.

It is found in the cytoplasm. It catalyses the reaction Endonucleolytic cleavage at a junction such as a reciprocal single-stranded crossover between two homologous DNA duplexes (Holliday junction).. Functionally, endonuclease that resolves Holliday junction intermediates in genetic recombination. Cleaves mobile four-strand junctions by introducing symmetrical nicks in paired strands. Promotes annealing of linear ssDNA with homologous dsDNA. Required for DNA repair, homologous recombination and chromosome segregation. The polypeptide is Holliday junction resolvase RecU (Listeria monocytogenes serotype 4b (strain F2365)).